The primary structure comprises 257 residues: Receptor expression-enhancing protein 4 (257 aa).

2 helical membrane passes run Met-1–Tyr-21 and Trp-42–Phe-62. A phosphoserine mark is found at Ser-152 and Ser-194. Residues Ile-159–Ser-257 are disordered. The residue at position 196 (Thr-196) is a Phosphothreonine. Residue Ser-202 is modified to Phosphoserine. The residue at position 250 (Thr-250) is a Phosphothreonine. Ser-253 carries the phosphoserine modification.

Belongs to the DP1 family.

The protein localises to the endoplasmic reticulum membrane. Microtubule-binding protein required to ensure proper cell division and nuclear envelope reassembly by sequestering the endoplasmic reticulum away from chromosomes during mitosis. Probably acts by clearing the endoplasmic reticulum membrane from metaphase chromosomes. The sequence is that of Receptor expression-enhancing protein 4 (Reep4) from Rattus norvegicus (Rat).